A 731-amino-acid polypeptide reads, in one-letter code: Cucumisin (731 aa).

The signal sequence occupies residues 1-22 (MSSSLIFKLFFFSLFFSNRLAS). Residues 23 to 110 (RLDSDDDGKN…VFLNEMNELH (88 aa)) constitute a propeptide, activation peptide. Residues 34-110 (YIVYMGRKLE…VFLNEMNELH (77 aa)) form the Inhibitor I9 domain. The Peptidase S8 domain maps to 114-584 (SWDFLGFPLT…SGHVNPLKAV (471 aa)). Residue aspartate 140 is the Charge relay system of the active site. Residues cysteine 166 and cysteine 174 are joined by a disulfide bond. The active-site Charge relay system is histidine 204. 2 disulfide bridges follow: cysteine 245–cysteine 250 and cysteine 380–cysteine 397. An N-linked (GlcNAc...) asparagine glycan is attached at asparagine 466. Serine 525 (charge relay system) is an active-site residue. Residues 616–731 (GDYSACTSGN…RSPITITSLV (116 aa)) constitute a propeptide that is removed on maturation. The N-linked (GlcNAc...) asparagine glycan is linked to asparagine 652.

The protein belongs to the peptidase S8 family. As to quaternary structure, monomer and dimer. Post-translationally, the C-terminal propeptide is autocleaved. As to expression, specifically expressed in fruits. Expressed in sarcocarp (at protein level).

It localises to the secreted. The catalysed reaction is Hydrolysis of proteins with broad specificity.. The sequence is that of Cucumisin from Cucumis melo (Muskmelon).